Here is a 93-residue protein sequence, read N- to C-terminus: Small ribosomal subunit protein uS19 (93 aa).

Disordered stretches follow at residues 1–25 (MPRS…QNTK) and 74–93 (FAPT…ARRR). 2 stretches are compositionally biased toward basic and acidic residues: residues 14–23 (HLQKKVDDQN) and 81–93 (RGHD…ARRR).

It belongs to the universal ribosomal protein uS19 family.

In terms of biological role, protein S19 forms a complex with S13 that binds strongly to the 16S ribosomal RNA. This Beutenbergia cavernae (strain ATCC BAA-8 / DSM 12333 / CCUG 43141 / JCM 11478 / NBRC 16432 / NCIMB 13614 / HKI 0122) protein is Small ribosomal subunit protein uS19.